The chain runs to 196 residues: dITP/XTP pyrophosphatase (196 aa).

Position 7–12 (7–12) interacts with substrate; the sequence is TGNAGK. The Mg(2+) site is built by glutamate 39 and aspartate 68. The active-site Proton acceptor is aspartate 68. Residues serine 69, 153–156, lysine 176, and 181–182 each bind substrate; these read HGYD and HR.

It belongs to the HAM1 NTPase family. As to quaternary structure, homodimer. It depends on Mg(2+) as a cofactor.

It catalyses the reaction XTP + H2O = XMP + diphosphate + H(+). It carries out the reaction dITP + H2O = dIMP + diphosphate + H(+). The enzyme catalyses ITP + H2O = IMP + diphosphate + H(+). Pyrophosphatase that catalyzes the hydrolysis of nucleoside triphosphates to their monophosphate derivatives, with a high preference for the non-canonical purine nucleotides XTP (xanthosine triphosphate), dITP (deoxyinosine triphosphate) and ITP. Seems to function as a house-cleaning enzyme that removes non-canonical purine nucleotides from the nucleotide pool, thus preventing their incorporation into DNA/RNA and avoiding chromosomal lesions. This Thioalkalivibrio sulfidiphilus (strain HL-EbGR7) protein is dITP/XTP pyrophosphatase.